Reading from the N-terminus, the 97-residue chain is Citrate lyase acyl carrier protein 2 (97 aa).

The residue at position 14 (Ser14) is an O-(phosphoribosyl dephospho-coenzyme A)serine.

This sequence belongs to the CitD family. Oligomer with a subunit composition of (alpha,beta,gamma)6.

It is found in the cytoplasm. Functionally, covalent carrier of the coenzyme of citrate lyase. The polypeptide is Citrate lyase acyl carrier protein 2 (Salmonella paratyphi A (strain ATCC 9150 / SARB42)).